The following is a 251-amino-acid chain: MSLPATFDLTPEDAQLLLAANTHLGARNVQVHQEPYVFNARPDGVHVINVGKTWEKLVLAARIIAAIPNPEDVVAISSRTYGQRAVLKFAAHTGATPIAGRFTPGSFTNYITRSFKEPRLVIVTDPRSDAQAIKEASYVNIPVIALTDLDSPSEYVDVAIPCNNRGKHSIGLIWYLLAREVLRLRGALTDRTQPWSIMPDLYFYRNPEEIEQQTAEEAAQEAGEEEAKEEVTEEQTEAAEWAQENADNVEW.

S2 carries the post-translational modification N-acetylserine. Residues E209–W251 are disordered. The segment covering A218–E237 has biased composition (acidic residues). Residues A238 to W251 show a composition bias toward low complexity.

It belongs to the universal ribosomal protein uS2 family. As to quaternary structure, component of the small ribosomal subunit. Mature ribosomes consist of a small (40S) and a large (60S) subunit. The 40S subunit contains about 33 different proteins and 1 molecule of RNA (18S). The 60S subunit contains about 49 different proteins and 3 molecules of RNA (25S, 5.8S and 5S). Interacts with RPS21.

The protein localises to the cytoplasm. Functionally, required for the assembly and/or stability of the 40S ribosomal subunit. Required for the processing of the 20S rRNA-precursor to mature 18S rRNA in a late step of the maturation of 40S ribosomal subunits. The chain is Small ribosomal subunit protein uS2 from Candida glabrata (strain ATCC 2001 / BCRC 20586 / JCM 3761 / NBRC 0622 / NRRL Y-65 / CBS 138) (Yeast).